The sequence spans 564 residues: DNA ligase B (564 aa).

Catalysis depends on lysine 130, which acts as the N6-AMP-lysine intermediate.

It belongs to the NAD-dependent DNA ligase family. LigB subfamily.

It catalyses the reaction NAD(+) + (deoxyribonucleotide)n-3'-hydroxyl + 5'-phospho-(deoxyribonucleotide)m = (deoxyribonucleotide)n+m + AMP + beta-nicotinamide D-nucleotide.. Its function is as follows. Catalyzes the formation of phosphodiester linkages between 5'-phosphoryl and 3'-hydroxyl groups in double-stranded DNA using NAD as a coenzyme and as the energy source for the reaction. The polypeptide is DNA ligase B (Klebsiella pneumoniae subsp. pneumoniae (strain ATCC 700721 / MGH 78578)).